Consider the following 226-residue polypeptide: Thiamine-phosphate synthase (226 aa).

4-amino-2-methyl-5-(diphosphooxymethyl)pyrimidine is bound by residues 46–50 and Asp-83; that span reads QFRDK. 2 residues coordinate Mg(2+): Asp-84 and Asp-103. Residue Ser-122 participates in 4-amino-2-methyl-5-(diphosphooxymethyl)pyrimidine binding. 149 to 151 serves as a coordination point for 2-[(2R,5Z)-2-carboxy-4-methylthiazol-5(2H)-ylidene]ethyl phosphate; the sequence is TQS. Lys-152 is a binding site for 4-amino-2-methyl-5-(diphosphooxymethyl)pyrimidine. 2-[(2R,5Z)-2-carboxy-4-methylthiazol-5(2H)-ylidene]ethyl phosphate contacts are provided by residues Gly-181 and 201–202; that span reads IT.

It belongs to the thiamine-phosphate synthase family. Requires Mg(2+) as cofactor.

It carries out the reaction 2-[(2R,5Z)-2-carboxy-4-methylthiazol-5(2H)-ylidene]ethyl phosphate + 4-amino-2-methyl-5-(diphosphooxymethyl)pyrimidine + 2 H(+) = thiamine phosphate + CO2 + diphosphate. The catalysed reaction is 2-(2-carboxy-4-methylthiazol-5-yl)ethyl phosphate + 4-amino-2-methyl-5-(diphosphooxymethyl)pyrimidine + 2 H(+) = thiamine phosphate + CO2 + diphosphate. The enzyme catalyses 4-methyl-5-(2-phosphooxyethyl)-thiazole + 4-amino-2-methyl-5-(diphosphooxymethyl)pyrimidine + H(+) = thiamine phosphate + diphosphate. The protein operates within cofactor biosynthesis; thiamine diphosphate biosynthesis; thiamine phosphate from 4-amino-2-methyl-5-diphosphomethylpyrimidine and 4-methyl-5-(2-phosphoethyl)-thiazole: step 1/1. Functionally, condenses 4-methyl-5-(beta-hydroxyethyl)thiazole monophosphate (THZ-P) and 2-methyl-4-amino-5-hydroxymethyl pyrimidine pyrophosphate (HMP-PP) to form thiamine monophosphate (TMP). This is Thiamine-phosphate synthase from Haemophilus influenzae (strain 86-028NP).